A 303-amino-acid chain; its full sequence is Ornithine carbamoyltransferase (303 aa).

Residues 52–55 (STRT), Gln-79, Arg-103, and 130–133 (HPCQ) contribute to the carbamoyl phosphate site. L-ornithine-binding positions include Asn-161, Asp-221, and 225–226 (SM). Residues 260 to 261 (CL) and Arg-288 each bind carbamoyl phosphate.

The protein belongs to the aspartate/ornithine carbamoyltransferase superfamily. OTCase family.

It is found in the cytoplasm. It carries out the reaction carbamoyl phosphate + L-ornithine = L-citrulline + phosphate + H(+). It participates in amino-acid biosynthesis; L-arginine biosynthesis; L-arginine from L-ornithine and carbamoyl phosphate: step 1/3. In terms of biological role, reversibly catalyzes the transfer of the carbamoyl group from carbamoyl phosphate (CP) to the N(epsilon) atom of ornithine (ORN) to produce L-citrulline. The polypeptide is Ornithine carbamoyltransferase (argF) (Rhizobium meliloti (strain 1021) (Ensifer meliloti)).